The following is a 122-amino-acid chain: Large ribosomal subunit protein uL14 (122 aa).

It belongs to the universal ribosomal protein uL14 family. As to quaternary structure, part of the 50S ribosomal subunit. Forms a cluster with proteins L3 and L19. In the 70S ribosome, L14 and L19 interact and together make contacts with the 16S rRNA in bridges B5 and B8.

In terms of biological role, binds to 23S rRNA. Forms part of two intersubunit bridges in the 70S ribosome. In Ruegeria pomeroyi (strain ATCC 700808 / DSM 15171 / DSS-3) (Silicibacter pomeroyi), this protein is Large ribosomal subunit protein uL14.